The sequence spans 253 residues: REF/SRPP-like protein OsI_017815 (253 aa).

Positions 1-26 (MADSGSDAPISNRPEEEVTVEKTPEM) are disordered. Over residues 13 to 26 (RPEEEVTVEKTPEM) the composition is skewed to basic and acidic residues.

It belongs to the REF/SRPP family.

This Oryza sativa subsp. indica (Rice) protein is REF/SRPP-like protein OsI_017815.